Here is a 310-residue protein sequence, read N- to C-terminus: UDP-N-acetylenolpyruvoylglucosamine reductase (310 aa).

Positions R35–G203 constitute an FAD-binding PCMH-type domain. The active site involves R183. S232 (proton donor) is an active-site residue. Residue E302 is part of the active site.

The protein belongs to the MurB family. FAD is required as a cofactor.

It is found in the cytoplasm. The enzyme catalyses UDP-N-acetyl-alpha-D-muramate + NADP(+) = UDP-N-acetyl-3-O-(1-carboxyvinyl)-alpha-D-glucosamine + NADPH + H(+). The protein operates within cell wall biogenesis; peptidoglycan biosynthesis. Functionally, cell wall formation. In Myxococcus xanthus (strain DK1622), this protein is UDP-N-acetylenolpyruvoylglucosamine reductase.